Here is a 127-residue protein sequence, read N- to C-terminus: MAYGVKIAKGDAYKRAARKRRHIRVRKHLSGSPERPRLVVTRSNRHIVAQVIDDIAGHTLASASTLDTSIRGGEGDKSAQAQQVGALVAERAKAAGVEAVVFDRGGNQYAGRIAALADAAREAGLKF.

This sequence belongs to the universal ribosomal protein uL18 family. As to quaternary structure, part of the 50S ribosomal subunit; part of the 5S rRNA/L5/L18/L25 subcomplex. Contacts the 5S and 23S rRNAs.

Its function is as follows. This is one of the proteins that bind and probably mediate the attachment of the 5S RNA into the large ribosomal subunit, where it forms part of the central protuberance. In Streptomyces griseus subsp. griseus (strain JCM 4626 / CBS 651.72 / NBRC 13350 / KCC S-0626 / ISP 5235), this protein is Large ribosomal subunit protein uL18.